The primary structure comprises 356 residues: Dual-specificity RNA methyltransferase RlmN (356 aa).

Glu-89 functions as the Proton acceptor in the catalytic mechanism. Positions 108-341 (KHARYTICVS…CTIRESKGLD (234 aa)) constitute a Radical SAM core domain. A disulfide bridge links Cys-115 with Cys-346. Residues Cys-122, Cys-126, and Cys-129 each contribute to the [4Fe-4S] cluster site. S-adenosyl-L-methionine contacts are provided by residues 172 to 173 (GE), Ser-204, 227 to 229 (SLH), and Asn-303. Cys-346 serves as the catalytic S-methylcysteine intermediate.

The protein belongs to the radical SAM superfamily. RlmN family. Requires [4Fe-4S] cluster as cofactor.

Its subcellular location is the cytoplasm. The enzyme catalyses adenosine(2503) in 23S rRNA + 2 reduced [2Fe-2S]-[ferredoxin] + 2 S-adenosyl-L-methionine = 2-methyladenosine(2503) in 23S rRNA + 5'-deoxyadenosine + L-methionine + 2 oxidized [2Fe-2S]-[ferredoxin] + S-adenosyl-L-homocysteine. It carries out the reaction adenosine(37) in tRNA + 2 reduced [2Fe-2S]-[ferredoxin] + 2 S-adenosyl-L-methionine = 2-methyladenosine(37) in tRNA + 5'-deoxyadenosine + L-methionine + 2 oxidized [2Fe-2S]-[ferredoxin] + S-adenosyl-L-homocysteine. Its function is as follows. Specifically methylates position 2 of adenine 2503 in 23S rRNA and position 2 of adenine 37 in tRNAs. m2A2503 modification seems to play a crucial role in the proofreading step occurring at the peptidyl transferase center and thus would serve to optimize ribosomal fidelity. The sequence is that of Dual-specificity RNA methyltransferase RlmN from Campylobacter lari (strain RM2100 / D67 / ATCC BAA-1060).